Reading from the N-terminus, the 201-residue chain is Ubiquinone biosynthesis accessory factor UbiJ (201 aa).

Residues 15–112 (LNTFLYRSPA…QVVQNFVALA (98 aa)) enclose the SCP2 domain.

Belongs to the UbiJ family.

Its subcellular location is the cytoplasm. It participates in cofactor biosynthesis; ubiquinone biosynthesis. Required for ubiquinone (coenzyme Q) biosynthesis under aerobic conditions. Binds hydrophobic ubiquinone biosynthetic intermediates via its SCP2 domain and is essential for the stability of the Ubi complex. May constitute a docking platform where Ubi enzymes assemble and access their SCP2-bound polyprenyl substrates. Required for intracellular proliferation in macrophages. The chain is Ubiquinone biosynthesis accessory factor UbiJ from Salmonella typhimurium (strain LT2 / SGSC1412 / ATCC 700720).